The primary structure comprises 444 residues: Tubulin beta chain (444 aa).

GTP is bound by residues Q11, E69, S138, G142, T143, G144, N204, and N226. Residue E69 coordinates Mg(2+). Residues 423 to 444 (QQYQDATAEEEGEFDDEEEMDV) are disordered. Over residues 429-444 (TAEEEGEFDDEEEMDV) the composition is skewed to acidic residues.

This sequence belongs to the tubulin family. In terms of assembly, dimer of alpha and beta chains. A typical microtubule is a hollow water-filled tube with an outer diameter of 25 nm and an inner diameter of 15 nM. Alpha-beta heterodimers associate head-to-tail to form protofilaments running lengthwise along the microtubule wall with the beta-tubulin subunit facing the microtubule plus end conferring a structural polarity. Microtubules usually have 13 protofilaments but different protofilament numbers can be found in some organisms and specialized cells. Mg(2+) serves as cofactor.

It localises to the cytoplasm. The protein resides in the cytoskeleton. Tubulin is the major constituent of microtubules, a cylinder consisting of laterally associated linear protofilaments composed of alpha- and beta-tubulin heterodimers. Microtubules grow by the addition of GTP-tubulin dimers to the microtubule end, where a stabilizing cap forms. Below the cap, tubulin dimers are in GDP-bound state, owing to GTPase activity of alpha-tubulin. In Euplotes focardii, this protein is Tubulin beta chain.